The chain runs to 226 residues: ATP synthase subunit a (226 aa).

5 helical membrane passes run 17 to 37 (FNYLFHLILVAIIVLIVAKLA), 79 to 99 (LVATIGLIVLTSNVIGIIPGF), 105 to 125 (SLNLTLCLALSVFLYYNFEGI), 168 to 188 (FGNIKGDDLFLMVVLSLAPWV), and 200 to 222 (MALLQTFIFMILTYVYLAGAVVV).

The protein belongs to the ATPase A chain family. As to quaternary structure, F-type ATPases have 2 components, CF(1) - the catalytic core - and CF(0) - the membrane proton channel. CF(1) has five subunits: alpha(3), beta(3), gamma(1), delta(1), epsilon(1). CF(0) has three main subunits: a(1), b(2) and c(9-12). The alpha and beta chains form an alternating ring which encloses part of the gamma chain. CF(1) is attached to CF(0) by a central stalk formed by the gamma and epsilon chains, while a peripheral stalk is formed by the delta and b chains.

It localises to the cell inner membrane. Functionally, key component of the proton channel; it plays a direct role in the translocation of protons across the membrane. The chain is ATP synthase subunit a from Campylobacter fetus subsp. fetus (strain 82-40).